Consider the following 125-residue polypeptide: Holo-[acyl-carrier-protein] synthase (125 aa).

The Mg(2+) site is built by E9 and Q58.

It belongs to the P-Pant transferase superfamily. AcpS family. It depends on Mg(2+) as a cofactor.

Its subcellular location is the cytoplasm. It catalyses the reaction apo-[ACP] + CoA = holo-[ACP] + adenosine 3',5'-bisphosphate + H(+). Transfers the 4'-phosphopantetheine moiety from coenzyme A to a Ser of acyl-carrier-protein. This is Holo-[acyl-carrier-protein] synthase from Rhodopirellula baltica (strain DSM 10527 / NCIMB 13988 / SH1).